Reading from the N-terminus, the 283-residue chain is Pantothenate synthetase (283 aa).

An ATP-binding site is contributed by 34–41 (MGALHEGH). His-41 acts as the Proton donor in catalysis. (R)-pantoate is bound at residue Gln-65. Gln-65 provides a ligand contact to beta-alanine. 152-155 (GEKD) provides a ligand contact to ATP. Gln-158 provides a ligand contact to (R)-pantoate. 189 to 192 (MSSR) contacts ATP.

This sequence belongs to the pantothenate synthetase family. As to quaternary structure, homodimer.

It localises to the cytoplasm. The enzyme catalyses (R)-pantoate + beta-alanine + ATP = (R)-pantothenate + AMP + diphosphate + H(+). The protein operates within cofactor biosynthesis; (R)-pantothenate biosynthesis; (R)-pantothenate from (R)-pantoate and beta-alanine: step 1/1. Catalyzes the condensation of pantoate with beta-alanine in an ATP-dependent reaction via a pantoyl-adenylate intermediate. This is Pantothenate synthetase from Rhodopseudomonas palustris (strain BisA53).